The primary structure comprises 293 residues: SAGA-associated factor 29 (293 aa).

Residues Leu3–Lys88 adopt a coiled-coil conformation. In terms of domain architecture, SGF29 C-terminal spans Gly152 to Lys293. Histone H3K4me3 N-terminus binding regions lie at residues Asp194–Asp196 and Gln240–Cys243. Positions Phe264 to Asp266 are histone H3K4me3 binding. Lys288 bears the N6-acetyllysine mark.

It belongs to the SGF29 family. As to quaternary structure, interacts with dimethylated and trimethylated 'Lys-4' of histone H3 (H3K4me2 and H3K4me3), with a preference for the trimethylated form (H3K4me3). Component of some SAGA-type complexes. Component of the ADA2A-containing complex (ATAC), composed of KAT14, KAT2A, TADA2L, TADA3L, ZZ3, MBIP, WDR5, YEATS2, CCDC101 and DR1. Interacts with (methylated) CGAS. Interacts with TADA3L, GCN5L2, SUPT3H and MYC. Widely expressed with highest levels in testis. Highly expressed in hepatoma and other tumor cell lines.

The protein resides in the nucleus. Functionally, chromatin reader component of some histone acetyltransferase (HAT) SAGA-type complexes like the TFTC-HAT, ATAC or STAGA complexes. SGF29 specifically recognizes and binds methylated 'Lys-4' of histone H3 (H3K4me), with a preference for trimethylated form (H3K4me3). In the SAGA-type complexes, SGF29 is required to recruit complexes to H3K4me. Involved in the response to endoplasmic reticulum (ER) stress by recruiting the SAGA complex to H3K4me, thereby promoting histone H3 acetylation and cell survival. Also binds non-histone proteins that are methylated on Lys residues: specifically recognizes and binds CGAS monomethylated on 'Lys-491'. May be involved in MYC-mediated oncogenic transformation. The sequence is that of SAGA-associated factor 29 from Rattus norvegicus (Rat).